Here is a 212-residue protein sequence, read N- to C-terminus: Glycerol-3-phosphate acyltransferase (212 aa).

5 helical membrane-spanning segments follow: residues Ile3 to Ser23, Lys51 to Ala71, Asp78 to Phe98, Ala115 to Phe135, and Ser139 to Thr159.

The protein belongs to the PlsY family. Probably interacts with PlsX.

The protein localises to the cell inner membrane. It carries out the reaction an acyl phosphate + sn-glycerol 3-phosphate = a 1-acyl-sn-glycero-3-phosphate + phosphate. It participates in lipid metabolism; phospholipid metabolism. In terms of biological role, catalyzes the transfer of an acyl group from acyl-phosphate (acyl-PO(4)) to glycerol-3-phosphate (G3P) to form lysophosphatidic acid (LPA). This enzyme utilizes acyl-phosphate as fatty acyl donor, but not acyl-CoA or acyl-ACP. This is Glycerol-3-phosphate acyltransferase from Burkholderia multivorans (strain ATCC 17616 / 249).